Consider the following 219-residue polypeptide: Lipid transferase CIDEA (219 aa).

In terms of domain architecture, CIDE-N spans Pro-33–Pro-110. The interval Cys-163–Ser-180 is amphipathic helix.

It belongs to the CIDE family. In terms of assembly, homodimer. Interacts with CIDEC. Directly interacts with CEBPB. Interacts with isoform CLSTN3beta of CLSTN3; inhibiting the lipid transferase activity of CIDEA. As to expression, expressed in omental and subcutaneous adipose tissue (at protein level).

It is found in the lipid droplet. The protein resides in the nucleus. It catalyses the reaction a triacyl-sn-glycerol(in) = a triacyl-sn-glycerol(out). In terms of biological role, lipid transferase that promotes unilocular lipid droplet formation by mediating lipid droplet fusion. Lipid droplet fusion promotes their enlargement, restricting lipolysis and favoring lipid storage. Localizes on the lipid droplet surface, at focal contact sites between lipid droplets, and mediates atypical lipid droplet fusion by promoting directional net neutral lipid transfer from the smaller to larger lipid droplets. The transfer direction may be driven by the internal pressure difference between the contacting lipid droplet pair and occurs at a lower rate than that promoted by CIDEC. May also act as a CEBPB coactivator in epithelial cells to control the expression of a subset of CEBPB downstream target genes, including ID2, IGF1, PRLR, SOCS1, SOCS3, XDH, but not casein. By interacting with CEBPB, strengthens the association of CEBPB with the XDH promoter, increases histone acetylation and dissociates HDAC1 from the promoter. When overexpressed, induces apoptosis; the physiological significance of its role in apoptosis is unclear. This Homo sapiens (Human) protein is Lipid transferase CIDEA.